Consider the following 69-residue polypeptide: Cytochrome c oxidase subunit 8A, mitochondrial (69 aa).

The N-terminal 25 residues, 1-25 (MSVLTPLLLRGLAGSARRLPVPRAQ), are a transit peptide targeting the mitochondrion. The short motif at 2–19 (SVLTPLLLRGLAGSARRL) is the SIFI-degron element. Residues 26 to 36 (IHSKPPREQLG) are Mitochondrial matrix-facing. The chain crosses the membrane as a helical span at residues 37-60 (TMDVAIGITSCFLCFLLPAGWVLS). Residues 61-69 (HLESYKKRE) are Mitochondrial intermembrane-facing.

It belongs to the cytochrome c oxidase VIII family. Component of the cytochrome c oxidase (complex IV, CIV), a multisubunit enzyme composed of 14 subunits. The complex is composed of a catalytic core of 3 subunits MT-CO1, MT-CO2 and MT-CO3, encoded in the mitochondrial DNA, and 11 supernumerary subunits COX4I, COX5A, COX5B, COX6A, COX6B, COX6C, COX7A, COX7B, COX7C, COX8 and NDUFA4, which are encoded in the nuclear genome. The complex exists as a monomer or a dimer and forms supercomplexes (SCs) in the inner mitochondrial membrane with NADH-ubiquinone oxidoreductase (complex I, CI) and ubiquinol-cytochrome c oxidoreductase (cytochrome b-c1 complex, complex III, CIII), resulting in different assemblies (supercomplex SCI(1)III(2)IV(1) and megacomplex MCI(2)III(2)IV(2)). Post-translationally, in response to mitochondrial stress, the precursor protein is ubiquitinated by the SIFI complex in the cytoplasm before mitochondrial import, leading to its degradation. Within the SIFI complex, UBR4 initiates ubiquitin chain that are further elongated or branched by KCMF1.

It localises to the mitochondrion inner membrane. Its pathway is energy metabolism; oxidative phosphorylation. Functionally, component of the cytochrome c oxidase, the last enzyme in the mitochondrial electron transport chain which drives oxidative phosphorylation. The respiratory chain contains 3 multisubunit complexes succinate dehydrogenase (complex II, CII), ubiquinol-cytochrome c oxidoreductase (cytochrome b-c1 complex, complex III, CIII) and cytochrome c oxidase (complex IV, CIV), that cooperate to transfer electrons derived from NADH and succinate to molecular oxygen, creating an electrochemical gradient over the inner membrane that drives transmembrane transport and the ATP synthase. Cytochrome c oxidase is the component of the respiratory chain that catalyzes the reduction of oxygen to water. Electrons originating from reduced cytochrome c in the intermembrane space (IMS) are transferred via the dinuclear copper A center (CU(A)) of subunit 2 and heme A of subunit 1 to the active site in subunit 1, a binuclear center (BNC) formed by heme A3 and copper B (CU(B)). The BNC reduces molecular oxygen to 2 water molecules using 4 electrons from cytochrome c in the IMS and 4 protons from the mitochondrial matrix. The protein is Cytochrome c oxidase subunit 8A, mitochondrial (COX8A) of Carlito syrichta (Philippine tarsier).